A 261-amino-acid chain; its full sequence is Small ribosomal subunit protein eS1B (261 aa).

Over residues 1 to 18 (MTLGKNKRISKGGKRGKK) the composition is skewed to basic residues. Positions 1-23 (MTLGKNKRISKGGKRGKKKAQET) are disordered.

Belongs to the eukaryotic ribosomal protein eS1 family. Component of the small ribosomal subunit. Mature ribosomes consist of a small (40S) and a large (60S) subunit. The 40S subunit contains about 33 different proteins and 1 molecule of RNA (18S). The 60S subunit contains about 49 different proteins and 3 molecules of RNA (25S, 5.8S and 5S).

The protein resides in the cytoplasm. The protein is Small ribosomal subunit protein eS1B of Trypanosoma cruzi (strain CL Brener).